The primary structure comprises 691 residues: DNA ligase (691 aa).

NAD(+) contacts are provided by residues 53 to 57, 102 to 103, and Glu-135; these read DSEYD and SL. The active-site N6-AMP-lysine intermediate is the Lys-137. 4 residues coordinate NAD(+): Arg-158, Glu-195, Lys-310, and Lys-334. Zn(2+) contacts are provided by Cys-428, Cys-431, Cys-446, and Cys-452. One can recognise a BRCT domain in the interval 613–691; it reads SEGLPLDGQT…EEEFLALVGE (79 aa).

It belongs to the NAD-dependent DNA ligase family. LigA subfamily. Mg(2+) serves as cofactor. Mn(2+) is required as a cofactor.

The catalysed reaction is NAD(+) + (deoxyribonucleotide)n-3'-hydroxyl + 5'-phospho-(deoxyribonucleotide)m = (deoxyribonucleotide)n+m + AMP + beta-nicotinamide D-nucleotide.. Functionally, DNA ligase that catalyzes the formation of phosphodiester linkages between 5'-phosphoryl and 3'-hydroxyl groups in double-stranded DNA using NAD as a coenzyme and as the energy source for the reaction. It is essential for DNA replication and repair of damaged DNA. This is DNA ligase from Psychrobacter arcticus (strain DSM 17307 / VKM B-2377 / 273-4).